Reading from the N-terminus, the 83-residue chain is MAHKKGAGSTKNGRDSNAKRLGVKRFGGQRVKAGNILVRQRGMKFTPGLNVGCGKDFTLYALTDGIVNFDYKNAQQKRINIIG.

A disordered region spans residues 1 to 24; that stretch reads MAHKKGAGSTKNGRDSNAKRLGVK.

Belongs to the bacterial ribosomal protein bL27 family.

The protein localises to the plastid. It is found in the chloroplast. The protein is Large ribosomal subunit protein bL27c (rpl27) of Trieres chinensis (Marine centric diatom).